Consider the following 300-residue polypeptide: MKQITIASRESKLALWQTNFVKNRIQSELNIPCEISTMKTQGDIILDQPLNKIGGKALFMKELEIAMLNNKADIAVHSLKDVPYQLPQGFCLAGFMPREDPRDAFVSNKYNSIDDLPKGAIVGTSSLRRKAQLLHYRDDLEIRDLRGNVQTRLSKLDNGDYDAIILASAGLIRLELVERITQFIPVEISLPAVGQGIVVIEALERDNDLLEKIQKLNCRESSRVATAERAFNQELKGGCHVAIGAYAELDNNQITLMAMVASSDGKKILKRKMIGDDPTKLGKLLAQEMIALGAYKILES.

At cysteine 239 the chain carries S-(dipyrrolylmethanemethyl)cysteine.

The protein belongs to the HMBS family. As to quaternary structure, monomer. Dipyrromethane is required as a cofactor.

It catalyses the reaction 4 porphobilinogen + H2O = hydroxymethylbilane + 4 NH4(+). It functions in the pathway porphyrin-containing compound metabolism; protoporphyrin-IX biosynthesis; coproporphyrinogen-III from 5-aminolevulinate: step 2/4. Its function is as follows. Tetrapolymerization of the monopyrrole PBG into the hydroxymethylbilane pre-uroporphyrinogen in several discrete steps. The chain is Porphobilinogen deaminase from Francisella tularensis subsp. novicida (strain U112).